We begin with the raw amino-acid sequence, 162 residues long: MTPLFRKAVWLLFAVSVCAFAGSLAAQYVLGMEPCVLCISQRLCVLATALCAAIVLMCRPRRKAGGLFGAVFISIPAVTGISVAAYQLWLQSLPPGTAPSCGAPWTFRLKGWPLFDWFEPVVRGFGNCAEPDYLLGVALPVWSVAYFLAVALTVWWAWARAK.

The Cytoplasmic portion of the chain corresponds to 1 to 8 (MTPLFRKA). A helical transmembrane segment spans residues 9–25 (VWLLFAVSVCAFAGSLA). At 26 to 43 (AQYVLGMEPCVLCISQRL) the chain is on the periplasmic side. An intrachain disulfide couples C35 to C38. The helical transmembrane segment at 44–60 (CVLATALCAAIVLMCRP) threads the bilayer. The Cytoplasmic segment spans residues 61 to 67 (RRKAGGL). The chain crosses the membrane as a helical span at residues 68 to 85 (FGAVFISIPAVTGISVAA). Residues 86–141 (YQLWLQSLPPGTAPSCGAPWTFRLKGWPLFDWFEPVVRGFGNCAEPDYLLGVALPV) lie on the Periplasmic side of the membrane. Residues C101 and C128 are joined by a disulfide bond. The chain crosses the membrane as a helical span at residues 142–160 (WSVAYFLAVALTVWWAWAR). Over 161–162 (AK) the chain is Cytoplasmic.

This sequence belongs to the DsbB family.

It localises to the cell inner membrane. Functionally, required for disulfide bond formation in some periplasmic proteins. Acts by oxidizing the DsbA protein. The polypeptide is Disulfide bond formation protein B (Neisseria meningitidis serogroup A / serotype 4A (strain DSM 15465 / Z2491)).